A 332-amino-acid chain; its full sequence is Fructose-1,6-bisphosphatase class 1 (332 aa).

Residues Glu-89, Asp-110, Leu-112, and Asp-113 each coordinate Mg(2+). Residues 113-116 (DGSS), Asn-206, Tyr-239, 257-259 (YLY), and Lys-269 each bind substrate. Glu-275 serves as a coordination point for Mg(2+).

This sequence belongs to the FBPase class 1 family. As to quaternary structure, homotetramer. The cofactor is Mg(2+).

The protein localises to the cytoplasm. The catalysed reaction is beta-D-fructose 1,6-bisphosphate + H2O = beta-D-fructose 6-phosphate + phosphate. The protein operates within carbohydrate biosynthesis; gluconeogenesis. In Enterobacter sp. (strain 638), this protein is Fructose-1,6-bisphosphatase class 1.